A 795-amino-acid chain; its full sequence is Protein Jade-3 (795 aa).

A compositionally biased stretch (low complexity) spans 1-25 (MKRLRTPSSSDSSDNESPSTSFSSN). A disordered region spans residues 1–41 (MKRLRTPSSSDSSDNESPSTSFSSNKYGSKPGTPASAQKKP). A PHD-type 1 zinc finger spans residues 201 to 251 (DVICDVCRSPDSEEGNDMVFCDKCNICVHQACYGIVKVPDGNWLCRTCVLG). A C2HC pre-PHD-type zinc finger spans residues 253–287 (TPQCLLCPKTGGAMKATRAGTKWAHVSCALWIPEV). The PHD-type 2 zinc-finger motif lies at 311 to 367 (LICSLCKLKTGACIQCSVKNCTIPFHVTCAFEHSLEMKTILDEGDEVKFKSYCLKHS). 3 disordered regions span residues 630–654 (HGQS…NGIL), 667–687 (AASE…SGFH), and 714–795 (FEKN…SVQR). Composition is skewed to polar residues over residues 678 to 687 (SGKSQSSGFH) and 720 to 732 (KSSG…STER).

The protein belongs to the JADE family. In terms of assembly, component of the HBO1 complex.

In terms of biological role, scaffold subunit of some HBO1 complexes, which have a histone H4 acetyltransferase activity. This is Protein Jade-3 (jade3) from Danio rerio (Zebrafish).